The sequence spans 176 residues: Sperm-egg fusion protein TMEM95 (176 aa).

Positions Met-1–Ala-16 are cleaved as a signal peptide. Cystine bridges form between Cys-17-Cys-118, Cys-20-Cys-121, Cys-105-Cys-128, and Cys-109-Cys-134. Over Cys-17 to Lys-145 the chain is Extracellular. A helical transmembrane segment spans residues Ile-146–Glu-166. The Cytoplasmic portion of the chain corresponds to Ser-167–Leu-176.

Belongs to the TMEM95 family. As to quaternary structure, does not interact with sperm-egg fusion proteins IZUMO1 or IZUMO1R/JUNO. N-glycosylated. In terms of tissue distribution, spermatozoa (at protein level).

Its subcellular location is the cytoplasmic vesicle. The protein resides in the secretory vesicle. It localises to the acrosome membrane. Sperm protein required for fusion of sperm with the egg membrane during fertilization. The polypeptide is Sperm-egg fusion protein TMEM95 (Homo sapiens (Human)).